A 179-amino-acid polypeptide reads, in one-letter code: Protein GrpE (179 aa).

Over residues 1–10 (MSKKEEKQEE) the composition is skewed to basic and acidic residues. Residues 1–23 (MSKKEEKQEELQEEMEAVDAAGV) are disordered.

This sequence belongs to the GrpE family. In terms of assembly, homodimer.

It is found in the cytoplasm. Participates actively in the response to hyperosmotic and heat shock by preventing the aggregation of stress-denatured proteins, in association with DnaK and GrpE. It is the nucleotide exchange factor for DnaK and may function as a thermosensor. Unfolded proteins bind initially to DnaJ; upon interaction with the DnaJ-bound protein, DnaK hydrolyzes its bound ATP, resulting in the formation of a stable complex. GrpE releases ADP from DnaK; ATP binding to DnaK triggers the release of the substrate protein, thus completing the reaction cycle. Several rounds of ATP-dependent interactions between DnaJ, DnaK and GrpE are required for fully efficient folding. The protein is Protein GrpE of Enterococcus faecalis (strain ATCC 700802 / V583).